The sequence spans 332 residues: Transcription factor ZEB2 (332 aa).

A disordered region spans residues 1–37 (MQSTESFHALPTRSDVEDPNERRKIQNRIAQKKHRQK). Over residues 14-24 (SDVEDPNERRK) the composition is skewed to basic and acidic residues. The bZIP domain occupies 17-50 (EDPNERRKIQNRIAQKKHRQKMKRRIEELETKVN). Residues 21 to 43 (ERRKIQNRIAQKKHRQKMKRRIE) are basic motif. Residues 45-52 (LETKVNNQ) form a leucine-zipper region. The segment at 106–170 (MHDSPRPNQQ…EGSLPTRQHD (65 aa)) is disordered. Residues 111-134 (RPNQQQRLSVSGMPSSPTSTSNVA) are compositionally biased toward polar residues. A compositionally biased stretch (low complexity) spans 143–155 (HSSASNHLSSLSL). Residues 160–170 (TEGSLPTRQHD) are compositionally biased toward polar residues.

It belongs to the bZIP family.

It localises to the nucleus. Its function is as follows. Transcription factor that specifically controls transcription of the zearalenone biosynthesis cluster genes. The polypeptide is Transcription factor ZEB2 (Gibberella zeae (strain ATCC MYA-4620 / CBS 123657 / FGSC 9075 / NRRL 31084 / PH-1) (Wheat head blight fungus)).